A 593-amino-acid polypeptide reads, in one-letter code: Replication protein E1 (593 aa).

The Nuclear localization signal motif lies at 72–74; that stretch reads KRK. The short motif at 86-95 is the Nuclear export signal element; it reads LSPRLSAVHI. At S87 the chain carries Phosphoserine; by host. Positions 134–297 are DNA-binding region; the sequence is NQNGAECELN…TIVEHQLASA (164 aa). Positions 382–546 constitute an SF3 helicase domain; the sequence is EEWKEIVQFL…LPMSDKDEPL (165 aa). 422-429 contacts ATP; that stretch reads GPPDTGKS. K503 participates in a covalent cross-link: Glycyl lysine isopeptide (Lys-Gly) (interchain with G-Cter in SUMO).

This sequence belongs to the papillomaviridae E1 protein family. Can form hexamers. Interacts with E2 protein; this interaction increases E1 DNA binding specificity. Interacts with host DNA polymerase subunit POLA2. Interacts with host single stranded DNA-binding protein RPA1. Interacts with host TOP1; this interaction stimulates the enzymatic activity of TOP1. Phosphorylated. Post-translationally, sumoylated.

It is found in the host nucleus. The catalysed reaction is Couples ATP hydrolysis with the unwinding of duplex DNA by translocating in the 3'-5' direction.. It carries out the reaction ATP + H2O = ADP + phosphate + H(+). In terms of biological role, ATP-dependent DNA 3'-5' helicase required for initiation of viral DNA replication. It forms a complex with the viral E2 protein. The E1-E2 complex binds to the replication origin which contains binding sites for both proteins. During the initial step, a dimer of E1 interacts with a dimer of protein E2 leading to a complex that binds the viral origin of replication with high specificity. Then, a second dimer of E1 displaces the E2 dimer in an ATP-dependent manner to form the E1 tetramer. Following this, two E1 monomers are added to each half of the site, which results in the formation of two E1 trimers on the viral ori. Subsequently, two hexamers will be created. The double hexamer acts as a bi-directional helicase machinery and unwinds the viral DNA and then recruits the host DNA polymerase to start replication. This is Replication protein E1 from Human papillomavirus type 48.